The chain runs to 307 residues: Probable transposase for transposon Tn903 (307 aa).

Its function is as follows. Required for transposition of transposon Tn903. In Escherichia coli, this protein is Probable transposase for transposon Tn903.